We begin with the raw amino-acid sequence, 409 residues long: Potassium channel subfamily K member 3 (409 aa).

The Cytoplasmic portion of the chain corresponds to 1-8; the sequence is MKRQNVRT. The helical transmembrane segment at 9–29 threads the bilayer; that stretch reads LALIVCTFTYLLVGAAVFDAL. An N-linked (GlcNAc...) asparagine glycan is attached at Asn-53. The pore-forming intramembrane region spans 78 to 101; sequence WRFAGSFYFAITVITTIGYGHAAP. Residues 108 to 128 form a helical membrane-spanning segment; the sequence is VFCMFYALLGIPLTLVMFQSL. Residues 129–158 are Cytoplasmic-facing; sequence GERINTFVRYLLHRAKRGLGMRHAEVSMAN. The chain crosses the membrane as a helical span at residues 159–179; it reads MVLIGFVSCISTLCIGAAAFS. Residues 184 to 207 constitute an intramembrane region (pore-forming); it reads WTFFQAYYYCFITLTTIGFGDYVA. The chain crosses the membrane as a helical span at residues 223-243; that stretch reads FSFVYILTGLTVIGAFLNLVV. The Cytoplasmic segment spans residues 244 to 409; that stretch reads LRFMTMNAED…RGLMKRRSSV (166 aa).

It belongs to the two pore domain potassium channel (TC 1.A.1.8) family. In terms of assembly, homodimer. Heterodimer with KCNK1. Heterodimer with KCNK9. As to expression, very strong expression in heart, also detected in kidney, brain, skin, testis, lung, skeletal muscle, small intestine and stomach. Not detected in liver, thymus or spleen. Expressed in adrenal glands mainly in zona glomerulosa and zona fasciculata of the cortex. Expressed at higher levels in brown and beige than in white adipocytes.

It is found in the cell membrane. The enzyme catalyses K(+)(in) = K(+)(out). It catalyses the reaction Na(+)(in) = Na(+)(out). With respect to regulation, activated by halothane and isoflurane. Inhibited by external acidification, diacylglycerol and anandamide. Inactivated by barium. In terms of biological role, k(+) channel that conducts voltage-dependent outward rectifying currents upon membrane depolarization. Voltage sensing is coupled to K(+) electrochemical gradient in an 'ion flux gating' mode where outward but not inward ion flow opens the gate. Changes ion selectivity and becomes permeable to Na(+) ions in response to extracellular acidification. Protonation of the pH sensor His-98 stabilizes C-type inactivation conformation likely converting the channel from outward K(+)-conducting, to inward Na(+)-conducting to nonconductive state. Homo- and heterodimerizes to form functional channels with distinct regulatory and gating properties. Allows K(+) currents with fast-gating kinetics important for the repolarization and hyperpolarization phases of action potentials. In cerebellar granule cells, heteromeric KCNK3:KCNK9 channel may hyperpolarize the resting membrane potential to limit intrinsic neuronal excitability, but once the action potential threshold is reached, it may support high-frequency action potential firing and increased neuronal excitability. Dispensable for central chemosensory respiration i.e. breathing controlled by brainstem CO2/pH, it rather conducts pH-sensitive currents and controls the firing rate of serotonergic raphe neurons involved in potentiation of the respiratory chemoreflex. Additionally, imparts chemosensitivity to type 1 cells in carotid bodies which respond to a decrease in arterial oxygen pressure or an increase in carbon dioxide pressure or pH to initiate adaptive changes in pulmonary ventilation. In adrenal gland, contributes to the maintenance of a hyperpolarized resting membrane potential of aldosterone-producing cells at zona glomerulosa and limits aldosterone release as part of a regulatory mechanism that controls arterial blood pressure and electrolyte homeostasis. In brown adipocytes, mediates K(+) efflux that counteracts norepinephrine-induced membrane depolarization, limits Ca(2+) efflux and downstream cAMP and PKA signaling, ultimately attenuating lipid oxidation and adaptive thermogenesis. The polypeptide is Potassium channel subfamily K member 3 (Mus musculus (Mouse)).